Consider the following 512-residue polypeptide: MEEVQEYLKKDRSPQQHFLYPLLLQEYIYTLAHDDSLNGSIFYEPIEFIGYDNKFSLVLVKRLIIRMYQQNFLIYLVNDSNQNRFGGHSNYFYSHFFYSQMVSKGFSVIVEIPFSLRLVSSSEEKEIPKSQNLGSIHSIFPFLEDKLSHLNNVSDILIPHPIHFEILVQILQCWIQDVPSLHLLRFFLHKYQNLNKTIQSNKTIYVFSKENKRLFWFLYNSYVSECEFLLVFFHKQSCYLRSTSSGAFLERSHFYGKMEHIIIVCCNNFQKTLWPVKDPLIHYVRYQGKAILASRGTHLLMKKWRYYFVNFWQYYFHFWSQPYRMHINSLLNYSFYFMGYLLGVLINPYAVKNQMLENSFLIDTVINKFDTIIPIIPLIGSLSKAKFCTFSGHPISKPIWADLLDFDIIDRFGRICRNLSHYHSGSSKKQSLYRIKYILRLSGGXXLARKHKSTXVPLLQRLGSGLLEEFFTEEXQVLSFFFPKTTLFTLHGSHRERIWSLDIIRINDLVNN.

It belongs to the intron maturase 2 family. MatK subfamily.

It localises to the plastid. The protein resides in the chloroplast. Functionally, usually encoded in the trnK tRNA gene intron. Probably assists in splicing its own and other chloroplast group II introns. This chain is Maturase K, found in Lilium regale (Regal lily).